Reading from the N-terminus, the 248-residue chain is Coenzyme F420:L-glutamate ligase (248 aa).

GTP is bound by residues I15 to I18, E45 to T46, and K50. D115 is a binding site for a divalent metal cation. N118 contributes to the GTP binding site. A divalent metal cation-binding residues include D155, S156, and Q213. Position 211–218 (M211–I218) interacts with GTP.

Belongs to the CofE family. Homodimer. Requires Mg(2+) as cofactor. It depends on Mn(2+) as a cofactor. The cofactor is K(+).

The enzyme catalyses oxidized coenzyme F420-0 + GTP + L-glutamate = oxidized coenzyme F420-1 + GDP + phosphate + H(+). It carries out the reaction oxidized coenzyme F420-1 + GTP + L-glutamate = oxidized coenzyme F420-2 + GDP + phosphate + H(+). It functions in the pathway cofactor biosynthesis; coenzyme F420 biosynthesis. Catalyzes the GTP-dependent successive addition of two or more gamma-linked L-glutamates to the L-lactyl phosphodiester of 7,8-didemethyl-8-hydroxy-5-deazariboflavin (F420-0) to form coenzyme F420-0-glutamyl-glutamate (F420-2) or polyglutamated F420 derivatives. The chain is Coenzyme F420:L-glutamate ligase from Methanococcus maripaludis (strain C7 / ATCC BAA-1331).